The sequence spans 1066 residues: Protein sts5 (1066 aa).

Over residues 18-28 (QQDPSDAQSSP) the composition is skewed to low complexity. Disordered regions lie at residues 18–40 (QQDPSDAQSSPTFVPSANPSLTT), 154–178 (ATSTNISPRRHAKSHSVASVSSPNS), and 247–286 (SNFRPEGGGHRHRRSTGSLSVGSSGSGFSSGGSGNPRKNL). Positions 29–40 (TFVPSANPSLTT) are enriched in polar residues. Thr157 is subject to Phosphothreonine. Low complexity predominate over residues 168 to 178 (HSVASVSSPNS). Thr262 bears the Phosphothreonine mark. Phosphoserine is present on Ser264. Positions 270–280 (SGSGFSSGGSG) are enriched in gly residues. At Thr377 the chain carries Phosphothreonine. A disordered region spans residues 454 to 480 (SSAANKERQTSSGNQGSSNNSGNDKPK). Residues 464-476 (SSGNQGSSNNSGN) show a composition bias toward low complexity. The CSD2 domain occupies 482–556 (VWFKPSDKRV…AQVSALLHDT (75 aa)). Residues 618 to 934 (NINSSSATDF…VHYQLQLLLR (317 aa)) form the RNB domain. The DIS3L2 C-terminal domain occupies 983–1033 (QDGLVCFVAPSYFDVFFPSLGMEKRVHLDLLNLTHVRFEEDQGILSLYDES).

The protein belongs to the RNR ribonuclease family. In terms of assembly, interacts with serine/threonine phosphatase ppe1, protein kinase C and an osmosensing MAP kinase.

Its subcellular location is the cytoplasm. In terms of biological role, required for the maintenance of cell shape during interphase. Required for localization of cortical actin to the growing tips before mitosis. The polypeptide is Protein sts5 (sts5) (Schizosaccharomyces pombe (strain 972 / ATCC 24843) (Fission yeast)).